Reading from the N-terminus, the 811-residue chain is Auxin response factor 8 (811 aa).

The TF-B3 DNA-binding region spans 126-228; sequence FCKTLTASDT…QLFLGIRHAT (103 aa). Disordered stretches follow at residues 467–496 and 544–565; these read HQYL…HLMH and HLQQ…SDFT. Polar residues-rich tracts occupy residues 469–482 and 544–555; these read YLQQ…DLML and HLQQWQQQSEMP. Residues 705–789 form the PB1 domain; that stretch reads KNFVKVYKSG…WYIKILSPED (85 aa).

This sequence belongs to the ARF family. As to quaternary structure, homodimers and heterodimers. As to expression, expressed in the whole plant.

It is found in the nucleus. Auxin response factors (ARFs) are transcriptional factors that bind specifically to the DNA sequence 5'-TGTCTC-3' found in the auxin-responsive promoter elements (AuxREs). Seems to act as transcriptional activator. Formation of heterodimers with Aux/IAA proteins may alter their ability to modulate early auxin response genes expression. Regulates both stamen and gynoecium maturation. Promotes jasmonic acid production. Partially redundant with ARF6. Involved in fruit initiation. Acts as an inhibitor to stop further carpel development in the absence of fertilization and the generation of signals required to initiate fruit and seed development. This is Auxin response factor 8 (ARF8) from Arabidopsis thaliana (Mouse-ear cress).